The chain runs to 142 residues: MGKYRKKAREIVFRTLYTYDIKGGDLFEIMEDHIKDIRGKLSKKTVDYIYSILKGIDEHLPEIDDILRENLKNWRLERLGYPERALLRLGVYELLFSDIEDKGRVFMDILDLTKCYIDNPDTVKFINGVLSTVYKNRQKVNQ.

Belongs to the NusB family.

In terms of biological role, involved in transcription antitermination. Required for transcription of ribosomal RNA (rRNA) genes. Binds specifically to the boxA antiterminator sequence of the ribosomal RNA (rrn) operons. The chain is Transcription antitermination protein NusB from Persephonella marina (strain DSM 14350 / EX-H1).